The following is a 259-amino-acid chain: Ovulation prohormone (259 aa).

The signal sequence occupies residues 1–34; it reads MKMSGLLSKPDYGVVGIVFTVVFCCWCSSSTTHA. A propeptide spanning residues 35-102 is cleaved from the precursor; it reads LSIAEPGRDR…SGEKTRLTAA (68 aa). Positions 42-103 are disordered; that stretch reads RDRYDKRSPT…GEKTRLTAAK (62 aa). 2 repeats span residues 119–123 and 146–150; these read RLRFH. The 2 X 5 AA repeats of R-L-R-F-H stretch occupies residues 119–150; it reads RLRFHKRRVDSADESNDDGFDRKAREPRLRFH. Residues 149–197 are disordered; that stretch reads FHDVRKRSATAEEGSENAEIEESHLGNSRSRRSAGSAPSSANEVQRSKR. The propeptide occupies 181–195; sequence SAGSAPSSANEVQRS. Leucine amide is present on Leu233. Positions 237–259 are excised as a propeptide; sequence GSAFFDHIPIIFGEPQYDYQPFK.

Belongs to the molluscan ELH family.

The protein resides in the secreted. CDCH induces ovulation and egg-mass production; it may also stimulate synthesis of secretory products in the female accessory sex glands and affect neurons in the neuronal circuits controlling locomotion and feeding. Functionally, calfluxin is involved in the influx of calcium into mitochondria of the albumen gland. In terms of biological role, CDCA (or alpha-CDCP) triggers the electrical activity of the caudodorsal cells (CDCS). The sequence is that of Ovulation prohormone from Lymnaea stagnalis (Great pond snail).